Reading from the N-terminus, the 175-residue chain is ATP synthase subunit b 2 (175 aa).

Residues 20–40 (LIFWTTITFVLVLIILKKIAW) form a helical membrane-spanning segment.

It belongs to the ATPase B chain family. In terms of assembly, F-type ATPases have 2 components, F(1) - the catalytic core - and F(0) - the membrane proton channel. F(1) has five subunits: alpha(3), beta(3), gamma(1), delta(1), epsilon(1). F(0) has four main subunits: a(1), b(2) and c(10-14). The alpha and beta chains form an alternating ring which encloses part of the gamma chain. F(1) is attached to F(0) by a central stalk formed by the gamma and epsilon chains, while a peripheral stalk is formed by the delta and b chains.

It is found in the cell inner membrane. Its function is as follows. F(1)F(0) ATP synthase produces ATP from ADP in the presence of a proton or sodium gradient. F-type ATPases consist of two structural domains, F(1) containing the extramembraneous catalytic core and F(0) containing the membrane proton channel, linked together by a central stalk and a peripheral stalk. During catalysis, ATP synthesis in the catalytic domain of F(1) is coupled via a rotary mechanism of the central stalk subunits to proton translocation. Component of the F(0) channel, it forms part of the peripheral stalk, linking F(1) to F(0). This Chlorobium luteolum (strain DSM 273 / BCRC 81028 / 2530) (Pelodictyon luteolum) protein is ATP synthase subunit b 2.